The chain runs to 262 residues: Steroid 5-alpha-reductase DET2 (262 aa).

6 helical membrane passes run 13–33, 51–71, 79–99, 113–133, 148–168, and 205–225; these read CLLT…FLQA, IAWF…FPFG, SLLL…IYPL, FPIT…YIQA, WFWW…YINI, and AIEW…GFFL.

Belongs to the steroid 5-alpha reductase family.

It localises to the membrane. It catalyses the reaction a 3-oxo-5alpha-steroid + NADP(+) = a 3-oxo-Delta(4)-steroid + NADPH + H(+). It carries out the reaction 5alpha-campestan-3-one + NADP(+) = campest-4-en-3-one + NADPH + H(+). The catalysed reaction is (22S,24R)-22-hydroxy-5alpha-ergostan-3-one + NADP(+) = (22S)-22-hydroxycampest-4-en-3-one + NADPH + H(+). The enzyme catalyses 3-dehydro-6-deoxoteasterone + NADP(+) = (22R,23R)-22,23-dihydroxycampest-4-en-3-one + NADPH + H(+). It participates in plant hormone biosynthesis; brassinosteroid biosynthesis. Inhibited by the 4-azasteroids 4-MA. Involved in a reduction step in the biosynthesis of the plant steroid, brassinolide (BL); acts at the second step in brassinolide biosynthesis in the 5alpha-reduction of (24R)- 24-methylcholest-4-en-3-one, which is further modified to form campestanol. Can use progesterone, testosterone, androstenedione and campestenone as substrate. Also catalyzes the conversion of campest-4-en-3-one (campesta-4-en-3-one, 4-en-3-one) to campest-3-one (campesta-3-one, 3-one), of (22S,24R)-22-hydroxyergost-4-en-3-one (22-hydroxy-campesta-4-en-3-one, 22-OH-4-en-3-one) to (22S,24R)-22-hydroxy-5alpha-ergostan-3-one (22-hydroxy-campesta-3-one, 22-OH-3-one), and of (22R,23R)-22,23-dihydroxy-5alpha-campestan-3-one (22,23,diOH-4-en-3-one) to (22R,23R)-22,23-dihydroxycampest-4-en-3-one (6-deoxo3DT). Required for the brassinosteroid- (BR) dependent regulation of seed size and shape as well as embryo development. This is Steroid 5-alpha-reductase DET2 from Arabidopsis thaliana (Mouse-ear cress).